The primary structure comprises 674 residues: ATP-dependent DNA helicase Rep (674 aa).

The region spanning 1–280 (MRLNPGQQHA…IKLEQNYRSS (280 aa)) is the UvrD-like helicase ATP-binding domain. ATP is bound by residues 22-29 (AGAGSGKT) and arginine 278. Positions 281-562 (GRILKAANIL…QLMTLHASKG (282 aa)) constitute a UvrD-like helicase C-terminal domain.

The protein belongs to the helicase family. UvrD subfamily. As to quaternary structure, homodimer.

The enzyme catalyses Couples ATP hydrolysis with the unwinding of duplex DNA by translocating in the 3'-5' direction.. It catalyses the reaction ATP + H2O = ADP + phosphate + H(+). Rep helicase is a single-stranded DNA-dependent ATPase involved in DNA replication; it can initiate unwinding at a nick in the DNA. It binds to the single-stranded DNA and acts in a progressive fashion along the DNA in the 3' to 5' direction. The chain is ATP-dependent DNA helicase Rep from Salmonella typhimurium (strain LT2 / SGSC1412 / ATCC 700720).